Reading from the N-terminus, the 784-residue chain is Repetin (784 aa).

The interval Met1–Asn91 is S-100-like. EF-hand domains lie at Asp13–Pro48 and Asn49–Ala84. Ca(2+) is bound by residues Glu32, Asp62, Asp64, Asp66, His68, and Glu73. Disordered stretches follow at residues Lys92–Trp221, Gly282–Ile584, Thr601–Lys661, and Arg677–Arg784. Basic and acidic residues predominate over residues Arg124 to Ser201. 7 stretches are compositionally biased toward polar residues: residues Thr286–Gly296, Ser304–Tyr343, Asp356–Gly392, Ser400–His486, Gly504–Ile584, Val610–His646, and Gln680–Gln695. Basic and acidic residues-rich tracts occupy residues Trp704–Gln722 and Gln729–Arg784.

The protein belongs to the S100-fused protein family. In terms of processing, potential substrate of transglutaminase. Some arginines are probably converted to citrullines by peptidylarginine deimidase. As to expression, expression is scattered in the normal epidermis but strong in the acrosyringium, the inner hair root sheath and in the filiform papilli of the tongue.

The protein localises to the secreted. Its subcellular location is the extracellular space. It is found in the extracellular matrix. In terms of biological role, involved in the cornified cell envelope formation. Multifunctional epidermal matrix protein. Reversibly binds calcium. The protein is Repetin (RPTN) of Homo sapiens (Human).